Consider the following 156-residue polypeptide: Ribonuclease 7 (156 aa).

Residues 1-28 form the signal peptide; the sequence is MAPARAGFCPLLLLLLLGLWVAEIPVSA. Residues 29–32 form an important for antibacterial activity region; it reads KPKG. Residue His-43 is the Proton acceptor of the active site. DUMP-binding residues include His-43, Lys-66, Asn-69, and Thr-70. 4 disulfides stabilise this stretch: Cys-51–Cys-109, Cys-65–Cys-119, Cys-83–Cys-134, and Cys-90–Cys-97. N-linked (GlcNAc...) asparagine glycosylation occurs at Asn-127. An important for antibacterial activity region spans residues 139–140; the sequence is KK. 2 residues coordinate dUMP: His-151 and Arg-154. His-151 acts as the Proton donor in catalysis.

In terms of tissue distribution, expressed in collecting ducts in kidney, and in apical uroepithelium in bladder (at protein level). Expressed in various epithelial tissues including skin, respiratory tract, genito-urinary tract and, at a low level, in the gut. Expressed in liver, kidney, skeletal muscle and heart.

The protein resides in the secreted. Functionally, exhibits a potent RNase activity. Has broad-spectrum antimicrobial activity against many pathogenic microorganisms including uropathogenic E.coli (UPEC), and remarkably potent activity (lethal dose of 90% &lt; 30 nM) against a vancomycin resistant Enterococcus faecium. Causes loss of bacterial membrane integrity. Probably contributes to urinary tract sterility. Bactericidal activity is independent of RNase activity. The protein is Ribonuclease 7 (RNASE7) of Homo sapiens (Human).